Consider the following 266-residue polypeptide: MTVPTPYEDLLRKIAEEGSHKDDRTGTGTTSLFGQQIRFDLNEGFPLLTTKKVHFHSVVGELLWFLQGDSNVKWLQDNNIRIWNEWADEDGELGPVYGVQWRSWPTPDGRHIDQISGALETLRNNPDSRRNIVSAWNVSELENMALPPCHLLFQLYVADGKLSCQLYQRSADMFLGVPFNIASYALLTHMFAQQAGLEVGEFIWTGGDCHIYDNHKEQVAEQLSREARPYPTLELNKAASMFEYSFDDITVSGYDPHPLIRGKVAV.

DUMP is bound at residue arginine 24. Position 54 (histidine 54) interacts with (6R)-5,10-methylene-5,6,7,8-tetrahydrofolate. Residue 129–130 (RR) coordinates dUMP. Residue cysteine 149 is the Nucleophile of the active site. Residues 169–172 (RSAD), asparagine 180, and 210–212 (HIY) each bind dUMP. Aspartate 172 is a binding site for (6R)-5,10-methylene-5,6,7,8-tetrahydrofolate. Position 265 (alanine 265) interacts with (6R)-5,10-methylene-5,6,7,8-tetrahydrofolate.

It belongs to the thymidylate synthase family. Bacterial-type ThyA subfamily. Homodimer.

The protein localises to the cytoplasm. The catalysed reaction is dUMP + (6R)-5,10-methylene-5,6,7,8-tetrahydrofolate = 7,8-dihydrofolate + dTMP. The protein operates within pyrimidine metabolism; dTTP biosynthesis. Functionally, catalyzes the reductive methylation of 2'-deoxyuridine-5'-monophosphate (dUMP) to 2'-deoxythymidine-5'-monophosphate (dTMP) while utilizing 5,10-methylenetetrahydrofolate (mTHF) as the methyl donor and reductant in the reaction, yielding dihydrofolate (DHF) as a by-product. This enzymatic reaction provides an intracellular de novo source of dTMP, an essential precursor for DNA biosynthesis. The sequence is that of Thymidylate synthase from Corynebacterium glutamicum (strain R).